The sequence spans 333 residues: Glyceraldehyde-3-phosphate dehydrogenase (333 aa).

Residues 11–12 (RI), D33, R78, and S120 contribute to the NAD(+) site. Residues 149–151 (SCT), T180, 209–210 (TG), and R232 contribute to the D-glyceraldehyde 3-phosphate site. The active-site Nucleophile is the C150. Position 150 is an S-nitrosocysteine (C150). An NAD(+)-binding site is contributed by N314.

Belongs to the glyceraldehyde-3-phosphate dehydrogenase family. Homotetramer. Post-translationally, S-nitrosylation of Cys-150 leads to translocation to the nucleus.

It localises to the cytoplasm. Its subcellular location is the cytosol. It is found in the cytoskeleton. The protein resides in the nucleus. It catalyses the reaction D-glyceraldehyde 3-phosphate + phosphate + NAD(+) = (2R)-3-phospho-glyceroyl phosphate + NADH + H(+). The catalysed reaction is S-nitroso-L-cysteinyl-[GAPDH] + L-cysteinyl-[protein] = L-cysteinyl-[GAPDH] + S-nitroso-L-cysteinyl-[protein]. It participates in carbohydrate degradation; glycolysis; pyruvate from D-glyceraldehyde 3-phosphate: step 1/5. Functionally, has both glyceraldehyde-3-phosphate dehydrogenase and nitrosylase activities, thereby playing a role in glycolysis and nuclear functions, respectively. Glyceraldehyde-3-phosphate dehydrogenase is a key enzyme in glycolysis that catalyzes the first step of the pathway by converting D-glyceraldehyde 3-phosphate (G3P) into 3-phospho-D-glyceroyl phosphate. Participates in nuclear events including transcription, RNA transport, DNA replication and apoptosis. Nuclear functions are probably due to the nitrosylase activity that mediates cysteine S-nitrosylation of nuclear target proteins such as SIRT1, HDAC2 and PRKDC. The chain is Glyceraldehyde-3-phosphate dehydrogenase from Danio rerio (Zebrafish).